The chain runs to 144 residues: Ribosomal RNA large subunit methyltransferase H (144 aa).

Residues Leu-63, Gly-92, and 111-116 (LSAMTL) each bind S-adenosyl-L-methionine.

The protein belongs to the RNA methyltransferase RlmH family. As to quaternary structure, homodimer.

It localises to the cytoplasm. It catalyses the reaction pseudouridine(1915) in 23S rRNA + S-adenosyl-L-methionine = N(3)-methylpseudouridine(1915) in 23S rRNA + S-adenosyl-L-homocysteine + H(+). In terms of biological role, specifically methylates the pseudouridine at position 1915 (m3Psi1915) in 23S rRNA. This is Ribosomal RNA large subunit methyltransferase H from Prochlorococcus marinus (strain MIT 9313).